The chain runs to 511 residues: Inactive cytochrome P450 monooxygenase cloA (511 aa).

A helical membrane pass occupies residues 17–37 (ILLTAGLCVPCALVIHGIYNL). Residues N81 and N344 are each glycosylated (N-linked (GlcNAc...) asparagine). Heme is bound at residue C450.

Belongs to the cytochrome P450 family. Heme is required as a cofactor.

The protein localises to the membrane. Its function is as follows. Inactive cytochrome P450 monooxygenase; part of the gene cluster that mediates the biosynthesis of fungal ergot alkaloid. DmaW catalyzes the first step of ergot alkaloid biosynthesis by condensing dimethylallyl diphosphate (DMAP) and tryptophan to form 4-dimethylallyl-L-tryptophan. The second step is catalyzed by the methyltransferase easF that methylates 4-dimethylallyl-L-tryptophan in the presence of S-adenosyl-L-methionine, resulting in the formation of 4-dimethylallyl-L-abrine. The catalase easC and the FAD-dependent oxidoreductase easE then transform 4-dimethylallyl-L-abrine to chanoclavine-I which is further oxidized by easD in the presence of NAD(+), resulting in the formation of chanoclavine-I aldehyde. Agroclavine dehydrogenase easG then mediates the conversion of chanoclavine-I aldehyde to agroclavine via a non-enzymatic adduct reaction: the substrate is an iminium intermediate that is formed spontaneously from chanoclavine-I aldehyde in the presence of glutathione. Further conversion of agroclavine to paspalic acid is a two-step process involving oxidation of agroclavine to elymoclavine and of elymoclavine to paspalic acid, the second step being performed by the elymoclavine oxidase cloA. However, cloA does not encode a functional enzyme indicating that C.fusiformis terminates its ergot alkaloid pathway at elymoclavine. This is Inactive cytochrome P450 monooxygenase cloA from Claviceps fusiformis (Ergot fungus).